The following is a 182-amino-acid chain: Protein SrpB (182 aa).

4 helical membrane passes run 11–31 (WLGL…IGLN), 43–63 (TFTL…QAEG), 73–93 (LSRT…GLIL), and 116–136 (IWIT…LGLI).

Belongs to the MgtC/SapB family.

It localises to the cell membrane. This Synechococcus elongatus (strain ATCC 33912 / PCC 7942 / FACHB-805) (Anacystis nidulans R2) protein is Protein SrpB (srpB).